We begin with the raw amino-acid sequence, 263 residues long: Endonuclease 8 (263 aa).

P2 (schiff-base intermediate with DNA) is an active-site residue. Catalysis depends on E3, which acts as the Proton donor. K53 serves as the catalytic Proton donor; for beta-elimination activity. DNA-binding residues include Q70, R125, and N169. Residues 229 to 263 (KVFHRDGEACERCGGIIEKTTLSSRPFYWCPHCQK) form an FPG-type zinc finger. R253 functions as the Proton donor; for delta-elimination activity in the catalytic mechanism.

Belongs to the FPG family. Zn(2+) is required as a cofactor.

It catalyses the reaction 2'-deoxyribonucleotide-(2'-deoxyribose 5'-phosphate)-2'-deoxyribonucleotide-DNA = a 3'-end 2'-deoxyribonucleotide-(2,3-dehydro-2,3-deoxyribose 5'-phosphate)-DNA + a 5'-end 5'-phospho-2'-deoxyribonucleoside-DNA + H(+). Functionally, involved in base excision repair of DNA damaged by oxidation or by mutagenic agents. Acts as a DNA glycosylase that recognizes and removes damaged bases. Has a preference for oxidized pyrimidines, such as thymine glycol, 5,6-dihydrouracil and 5,6-dihydrothymine. Has AP (apurinic/apyrimidinic) lyase activity and introduces nicks in the DNA strand. Cleaves the DNA backbone by beta-delta elimination to generate a single-strand break at the site of the removed base with both 3'- and 5'-phosphates. This chain is Endonuclease 8, found in Salmonella arizonae (strain ATCC BAA-731 / CDC346-86 / RSK2980).